The sequence spans 271 residues: Glutamate racemase (271 aa).

Substrate is bound by residues 10 to 11 (DS) and 42 to 43 (YG). C73 functions as the Proton donor/acceptor in the catalytic mechanism. Substrate is bound at residue 74 to 75 (NS). C183 acts as the Proton donor/acceptor in catalysis. Position 184 to 185 (184 to 185 (TH)) interacts with substrate.

The protein belongs to the aspartate/glutamate racemases family.

It carries out the reaction L-glutamate = D-glutamate. It participates in cell wall biogenesis; peptidoglycan biosynthesis. Provides the (R)-glutamate required for cell wall biosynthesis. The polypeptide is Glutamate racemase (Saccharopolyspora erythraea (strain ATCC 11635 / DSM 40517 / JCM 4748 / NBRC 13426 / NCIMB 8594 / NRRL 2338)).